Here is a 320-residue protein sequence, read N- to C-terminus: TPR repeat-containing protein MJ0263 (320 aa).

9 TPR repeats span residues 12 to 45 (ILKDVVNALECADKGNFDKALEYLEKAQKVDKDN), 46 to 79 (PLVLYVKGIVLKLKGDMEKAEKYFECLENIEGTS), 80 to 113 (LLSLGNLICLTFVKGEYERTLKYIEKLSRLSKPC), 114 to 147 (YLSPFHKALIYIEFGEFEKALEALDEFLKIYPNL), 148 to 181 (TSILRQKASILEILGKLDEALDCVNKILSIKKDD), 182 to 215 (AHAWYLKGRILKKLGNIKEALDALKMAINLNENL), 216 to 249 (VHVYKDIAYLELANNNYEEALNYITKYLEKFPND), 250 to 283 (VEAKFYLALIYENLNKVDDALKIYDKIISNKNVK), and 289 to 320 (KSSILNKARILEKLGKIEEAVETYNKAFDNNI).

This is TPR repeat-containing protein MJ0263 from Methanocaldococcus jannaschii (strain ATCC 43067 / DSM 2661 / JAL-1 / JCM 10045 / NBRC 100440) (Methanococcus jannaschii).